The following is a 524-amino-acid chain: Lycopene epsilon cyclase, chloroplastic (524 aa).

The N-terminal 45 residues, 1–45, are a transit peptide targeting the chloroplast; it reads MECVGARNFAAMAVSTFPSWSCRRKFPVVKRYSYRNIRFGLCSVR. Position 111 to 139 (111 to 139) interacts with NAD(+); it reads LVVIGCGPAGLALAAESAKLGLKVGLIGP. Transmembrane regions (helical) follow at residues 441–461 and 475–495; these read FFLF…RSFF and FLGS…MFVI.

This sequence belongs to the lycopene cyclase family.

Its subcellular location is the plastid. The protein localises to the chloroplast membrane. It catalyses the reaction a carotenoid psi-end group = a carotenoid epsilon-end group. The protein operates within carotenoid biosynthesis; alpha-zeacarotene biosynthesis. It participates in carotenoid biosynthesis; delta-carotene biosynthesis. Its function is as follows. Involved in carotenoid biosynthesis. Catalyzes the single epsilon-cyclization reaction which converts lycopene to delta-carotene and neurosporene to alpha-zeacarotene. Required for lutein biosynthesis. This is Lycopene epsilon cyclase, chloroplastic from Arabidopsis thaliana (Mouse-ear cress).